Here is a 431-residue protein sequence, read N- to C-terminus: Enolase (431 aa).

Glutamine 167 lines the (2R)-2-phosphoglycerate pocket. Glutamate 209 serves as the catalytic Proton donor. Aspartate 246, glutamate 289, and aspartate 316 together coordinate Mg(2+). (2R)-2-phosphoglycerate contacts are provided by lysine 341, arginine 370, serine 371, and lysine 392. Lysine 341 serves as the catalytic Proton acceptor.

Belongs to the enolase family. Component of the RNA degradosome, a multiprotein complex involved in RNA processing and mRNA degradation. It depends on Mg(2+) as a cofactor.

The protein resides in the cytoplasm. The protein localises to the secreted. It is found in the cell surface. It catalyses the reaction (2R)-2-phosphoglycerate = phosphoenolpyruvate + H2O. The protein operates within carbohydrate degradation; glycolysis; pyruvate from D-glyceraldehyde 3-phosphate: step 4/5. Functionally, catalyzes the reversible conversion of 2-phosphoglycerate (2-PG) into phosphoenolpyruvate (PEP). It is essential for the degradation of carbohydrates via glycolysis. In Shewanella sp. (strain ANA-3), this protein is Enolase.